Here is a 279-residue protein sequence, read N- to C-terminus: MTKQIIVTDSTSDLSKEYLEANNIHVIPLSLTIEGASYVDQVDITSEEFINHIENDEDVKTSQPAIGEFISAYEELGKDGSEIISIHLSSGLSGTYNTAYQASQMVDANVTVIDSKSISFGLGYQIQHLVELVKEGVSTSEIVKKLNHLRENIKLFVVIGQLNQLIKGGRISKTKGLIGNLMKIKPIGTLDDGRLELVHNARTQNSSIQYLKKEIAEFIGDHEIKSIGVAHANVIEYVDKLKKVFNEAFHVNNYDINVTTPVISAHTGQGAIGLVVLKK.

The region spanning 4 to 278 (QIIVTDSTSD…QGAIGLVVLK (275 aa)) is the DegV domain. Hexadecanoate contacts are provided by Thr61 and Ser93.

Functionally, may bind long-chain fatty acids, such as palmitate, and may play a role in lipid transport or fatty acid metabolism. The chain is DegV domain-containing protein SACOL1460 from Staphylococcus aureus (strain COL).